Reading from the N-terminus, the 489-residue chain is Betaine aldehyde dehydrogenase (489 aa).

K(+)-binding residues include threonine 26 and aspartate 93. Glycine 150–tryptophan 152 provides a ligand contact to NAD(+). The active-site Charge relay system is lysine 162. Lysine 176–glutamate 179 is an NAD(+) binding site. A K(+)-binding site is contributed by isoleucine 180. Glycine 229–threonine 232 serves as a coordination point for NAD(+). Leucine 245 contributes to the K(+) binding site. Catalysis depends on glutamate 251, which acts as the Proton acceptor. NAD(+)-binding residues include glycine 253, cysteine 285, and glutamate 386. Residue cysteine 285 is the Nucleophile of the active site. Cysteine 285 bears the Cysteine sulfenic acid (-SOH) mark. The K(+) site is built by lysine 456 and glycine 459. Glutamate 463 functions as the Charge relay system in the catalytic mechanism.

The protein belongs to the aldehyde dehydrogenase family. As to quaternary structure, dimer of dimers. Requires K(+) as cofactor.

It carries out the reaction betaine aldehyde + NAD(+) + H2O = glycine betaine + NADH + 2 H(+). Its pathway is amine and polyamine biosynthesis; betaine biosynthesis via choline pathway; betaine from betaine aldehyde: step 1/1. Its function is as follows. Involved in the biosynthesis of the osmoprotectant glycine betaine. Catalyzes the irreversible oxidation of betaine aldehyde to the corresponding acid. The polypeptide is Betaine aldehyde dehydrogenase (Paraburkholderia xenovorans (strain LB400)).